Reading from the N-terminus, the 152-residue chain is Nucleoside diphosphate kinase A (152 aa).

4 residues coordinate ATP: lysine 12, phenylalanine 60, arginine 88, and threonine 94. Lysine 100 is covalently cross-linked (Glycyl lysine isopeptide (Lys-Gly) (interchain with G-Cter in ubiquitin)). The ATP site is built by arginine 105 and asparagine 115. Histidine 118 (pros-phosphohistidine intermediate) is an active-site residue. Serine 120, serine 122, and serine 125 each carry phosphoserine.

The protein belongs to the NDK family. Hexamer of two different chains: An and B (A6, A5B, A4B2, A3B3, A2B4, AB5, B6). Interacts with PRUNE1. Component of the SET complex, composed of at least ANP32A, APEX1, HMGB2, NME1, SET and TREX1. Within this complex, interacts directly with SET. Also interacts with TREX1, but only following translocation to the nucleus. The cofactor is Mg(2+). Isoform 1 is expressed in heart, brain, placenta, lung, liver, skeletal muscle, pancreas, spleen and thymus. Expressed in lung carcinoma cell lines but not in normal lung tissues. Isoform 2 is ubiquitously expressed and its expression is also related to tumor differentiation.

The protein resides in the cytoplasm. It is found in the nucleus. It catalyses the reaction a 2'-deoxyribonucleoside 5'-diphosphate + ATP = a 2'-deoxyribonucleoside 5'-triphosphate + ADP. The catalysed reaction is a ribonucleoside 5'-diphosphate + ATP = a ribonucleoside 5'-triphosphate + ADP. Autophosphorylation at His-118 increases serine/threonine protein kinase activity of the enzyme. Interaction with the SET complex inhibits the endonuclease activity. Major role in the synthesis of nucleoside triphosphates other than ATP. The ATP gamma phosphate is transferred to the NDP beta phosphate via a ping-pong mechanism, using a phosphorylated active-site intermediate. Possesses nucleoside-diphosphate kinase, serine/threonine-specific protein kinase, geranyl and farnesyl pyrophosphate kinase, histidine protein kinase and 3'-5' exonuclease activities. Involved in cell proliferation, differentiation and development, signal transduction, G protein-coupled receptor endocytosis, and gene expression. Required for neural development including neural patterning and cell fate determination. During GZMA-mediated cell death, works in concert with TREX1. NME1 nicks one strand of DNA and TREX1 removes bases from the free 3' end to enhance DNA damage and prevent DNA end reannealing and rapid repair. This chain is Nucleoside diphosphate kinase A (NME1), found in Homo sapiens (Human).